We begin with the raw amino-acid sequence, 282 residues long: MSNKIISLGSIEIANDKPFVLFGGMNVLESRDLAMQIAETYAEVTQKLGIPYVFKASFDKANRSSVNSYRGPGMEEGLKIFEEIKSTFNLPLITDVHEVQQCAPVAEVVDVIQLPAFLARQTDLVVAMAKTGAIINVKKPQFLAPHEMRHIITKFNEAGNDEIMLCERGSSFGYNNLVVDMLGMDEMKQTGYPVIFDATHALQRPGGRSDSAGGRRAQATELARSGMALGLAGLFIEAHPDPDNAKCDGPCALPLHQLENYLTQMKAVDDLVKSFEPIDTSK.

It belongs to the KdsA family.

Its subcellular location is the cytoplasm. It carries out the reaction D-arabinose 5-phosphate + phosphoenolpyruvate + H2O = 3-deoxy-alpha-D-manno-2-octulosonate-8-phosphate + phosphate. It functions in the pathway carbohydrate biosynthesis; 3-deoxy-D-manno-octulosonate biosynthesis; 3-deoxy-D-manno-octulosonate from D-ribulose 5-phosphate: step 2/3. It participates in bacterial outer membrane biogenesis; lipopolysaccharide biosynthesis. The sequence is that of 2-dehydro-3-deoxyphosphooctonate aldolase from Shewanella halifaxensis (strain HAW-EB4).